The chain runs to 321 residues: Histidine N-alpha-methyltransferase (321 aa).

Position 56 (Tyr56) interacts with L-histidine. Residues Gly86, Lys92, Asp113, and Asp141 to Phe142 contribute to the S-adenosyl-L-methionine site. Residues Asn166, Tyr206, and Glu282–Ser284 each bind L-histidine.

This sequence belongs to the methyltransferase superfamily. EgtD family. Monomer.

It carries out the reaction L-histidine + 3 S-adenosyl-L-methionine = hercynine + 3 S-adenosyl-L-homocysteine + 3 H(+). Its pathway is amino-acid biosynthesis; ergothioneine biosynthesis. In terms of biological role, catalyzes the SAM-dependent triple methylation of the alpha-amino group of histidine to form hercynine, a step in the biosynthesis pathway of ergothioneine (ERG). ERG is one of the major redox buffers which protects bacteria against redox stressors and antibiotics; loss of ERG or mycothiol (MSH, the other major redox buffer in this bacteria) leads to respiratory alterations and bioenergetic deficiencies that negatively impact virulence. The sequence is that of Histidine N-alpha-methyltransferase (egtD) from Mycobacterium tuberculosis (strain CDC 1551 / Oshkosh).